A 180-amino-acid polypeptide reads, in one-letter code: ATP synthase subunit delta (180 aa).

The protein belongs to the ATPase delta chain family. In terms of assembly, F-type ATPases have 2 components, F(1) - the catalytic core - and F(0) - the membrane proton channel. F(1) has five subunits: alpha(3), beta(3), gamma(1), delta(1), epsilon(1). F(0) has three main subunits: a(1), b(2) and c(10-14). The alpha and beta chains form an alternating ring which encloses part of the gamma chain. F(1) is attached to F(0) by a central stalk formed by the gamma and epsilon chains, while a peripheral stalk is formed by the delta and b chains.

It localises to the cell inner membrane. Its function is as follows. F(1)F(0) ATP synthase produces ATP from ADP in the presence of a proton or sodium gradient. F-type ATPases consist of two structural domains, F(1) containing the extramembraneous catalytic core and F(0) containing the membrane proton channel, linked together by a central stalk and a peripheral stalk. During catalysis, ATP synthesis in the catalytic domain of F(1) is coupled via a rotary mechanism of the central stalk subunits to proton translocation. Functionally, this protein is part of the stalk that links CF(0) to CF(1). It either transmits conformational changes from CF(0) to CF(1) or is implicated in proton conduction. The chain is ATP synthase subunit delta from Geotalea uraniireducens (strain Rf4) (Geobacter uraniireducens).